Here is a 508-residue protein sequence, read N- to C-terminus: MGLPWYRVHTVVLNDPGRLLSVHIMHTALVAGWAGSMALYELAVFDPSDPVLDPMWRQGMFVIPFMTRLGITNSWGGWNITGGTITNPGLWSYEGVAGAHIVFSGLCFLAAIWHWVYWDLEIFCDERTGKPSLDLPKIFGIHLFLSGVACFGFGAFHVTGLYGPGIWVSDPYGLTGKVQPVNPAWGVEGFDPFVPGGIASHHIAAGTLGILAGLFHLSVRPPQRLYKGLRMGNIETVLSSSIAAVFFAAFVVAGTMWYGSATTPIELFGPTRYQWDQGYFQQEIYRRVSAGLAENQSVSEAWSKIPEKLAFYDYIGNNPAKGGLFRAGSMDNGDGIAVGWLGHPVFRNKEGRELFVRRMPTFFETFPVVLVDGDGIVRADVPFRRAESKYSVEQVGVTVEFYGGELNGVSYSDPATVKKYARRAQLGEIFELDRATLKSDGVFRSSPRGWFTFGHASFALLFFFGHIWHGARTLFRDVFAGIDPDLDAQVEFGAFQKLGDPTTKRQAV.

6 consecutive transmembrane segments (helical) span residues 21 to 36 (SVHI…WAGS), 101 to 115 (IVFS…IWHW), 140 to 156 (GIHL…FGAF), 203 to 218 (IAAG…FHLS), 237 to 252 (VLSS…AFVV), and 457 to 472 (SFAL…HGAR).

It belongs to the PsbB/PsbC family. PsbB subfamily. As to quaternary structure, PSII is composed of 1 copy each of membrane proteins PsbA, PsbB, PsbC, PsbD, PsbE, PsbF, PsbH, PsbI, PsbJ, PsbK, PsbL, PsbM, PsbT, PsbX, PsbY, PsbZ, Psb30/Ycf12, at least 3 peripheral proteins of the oxygen-evolving complex and a large number of cofactors. It forms dimeric complexes. Binds multiple chlorophylls. PSII binds additional chlorophylls, carotenoids and specific lipids. is required as a cofactor.

The protein resides in the plastid. The protein localises to the chloroplast thylakoid membrane. Its function is as follows. One of the components of the core complex of photosystem II (PSII). It binds chlorophyll and helps catalyze the primary light-induced photochemical processes of PSII. PSII is a light-driven water:plastoquinone oxidoreductase, using light energy to abstract electrons from H(2)O, generating O(2) and a proton gradient subsequently used for ATP formation. This is Photosystem II CP47 reaction center protein from Arabis hirsuta (Hairy rock-cress).